The following is a 142-amino-acid chain: Relaxin-3 (142 aa).

An N-terminal signal peptide occupies residues 1-25 (MARYMLLLLLAVWVLTGELWPGAEA). 3 cysteine pairs are disulfide-bonded: cysteine 35/cysteine 129, cysteine 47/cysteine 142, and cysteine 128/cysteine 133. Positions 55-118 (SDILAHEAMG…GTPGVLRGSR (64 aa)) are cleaved as a propeptide — connecting peptide.

This sequence belongs to the insulin family. In terms of assembly, heterodimer of a B chain and an A chain linked by two disulfide bonds.

It localises to the secreted. Its function is as follows. May play a role in neuropeptide signaling processes. Ligand for LGR7, RXFP3 and RXFP4. This Homo sapiens (Human) protein is Relaxin-3 (RLN3).